The following is an 89-amino-acid chain: Large ribosomal subunit protein bL27 (89 aa).

The tract at residues 1–22 is disordered; the sequence is MAHKKAGGSSRNGRDSAGRRLG.

It belongs to the bacterial ribosomal protein bL27 family.

The protein is Large ribosomal subunit protein bL27 of Dinoroseobacter shibae (strain DSM 16493 / NCIMB 14021 / DFL 12).